The sequence spans 247 residues: Probable enoyl-CoA hydratase echA6 (247 aa).

Belongs to the enoyl-CoA hydratase/isomerase family.

The enzyme catalyses a (3S)-3-hydroxyacyl-CoA = a (2E)-enoyl-CoA + H2O. It catalyses the reaction a 4-saturated-(3S)-3-hydroxyacyl-CoA = a (3E)-enoyl-CoA + H2O. In terms of biological role, could possibly oxidize fatty acids using specific components. This chain is Probable enoyl-CoA hydratase echA6 (echA6), found in Mycobacterium leprae (strain TN).